We begin with the raw amino-acid sequence, 650 residues long: Aminopeptidase B (650 aa).

Alanine 2 is subject to N-acetylalanine. A Phosphoserine modification is found at serine 7. Position 298-302 (298-302) interacts with substrate; that stretch reads GGMEN. Zn(2+) is bound at residue histidine 325. Catalysis depends on glutamate 326, which acts as the Proton acceptor. The Zn(2+) site is built by histidine 329 and glutamate 348. Lysine 446 carries the N6-acetyllysine modification.

This sequence belongs to the peptidase M1 family. Zn(2+) serves as cofactor.

It localises to the secreted. It catalyses the reaction Release of N-terminal Arg and Lys from oligopeptides when P1' is not Pro. Also acts on arylamides of Arg and Lys.. Functionally, exopeptidase which selectively removes arginine and/or lysine residues from the N-terminus of several peptide substrates including Arg(0)-Leu-enkephalin, Arg(0)-Met-enkephalin and Arg(-1)-Lys(0)-somatostatin-14. Can hydrolyze leukotriene A4 (LTA-4) into leukotriene B4 (LTB-4). The protein is Aminopeptidase B (RNPEP) of Homo sapiens (Human).